The following is a 133-amino-acid chain: MKTFPVSIVTPDGPVYEKEVEMVSVKAESGEMGILPGHIPTVAPLKISAVRLKNGGHTDYVAVSGGFIEVRPDKVTVLSSSAEEANHIDIHRANESKRRAEQRMQDKQAHVDFRRAEMALQRAVNRLNVSDMK.

This sequence belongs to the ATPase epsilon chain family. F-type ATPases have 2 components, CF(1) - the catalytic core - and CF(0) - the membrane proton channel. CF(1) has five subunits: alpha(3), beta(3), gamma(1), delta(1), epsilon(1). CF(0) has three main subunits: a, b and c.

It is found in the cell membrane. Its function is as follows. Produces ATP from ADP in the presence of a proton gradient across the membrane. The sequence is that of ATP synthase epsilon chain from Bacillus mycoides (strain KBAB4) (Bacillus weihenstephanensis).